Reading from the N-terminus, the 164-residue chain is Ribosome maturation factor RimM (164 aa).

A PRC barrel domain is found at Lys-90–Trp-161.

The protein belongs to the RimM family. In terms of assembly, binds ribosomal protein uS19.

It localises to the cytoplasm. Functionally, an accessory protein needed during the final step in the assembly of 30S ribosomal subunit, possibly for assembly of the head region. Essential for efficient processing of 16S rRNA. May be needed both before and after RbfA during the maturation of 16S rRNA. It has affinity for free ribosomal 30S subunits but not for 70S ribosomes. The polypeptide is Ribosome maturation factor RimM (Clostridium botulinum (strain Hall / ATCC 3502 / NCTC 13319 / Type A)).